A 166-amino-acid chain; its full sequence is Phosphopantetheine adenylyltransferase (166 aa).

Substrate is bound at residue S10. ATP is bound by residues 10-11 (SF) and H18. 3 residues coordinate substrate: K42, A79, and R93. Residues 94-96 (GLR), E104, and 129-135 (VRPITAT) each bind ATP.

The protein belongs to the bacterial CoaD family. In terms of assembly, homohexamer. Requires Mg(2+) as cofactor.

The protein localises to the cytoplasm. It catalyses the reaction (R)-4'-phosphopantetheine + ATP + H(+) = 3'-dephospho-CoA + diphosphate. It functions in the pathway cofactor biosynthesis; coenzyme A biosynthesis; CoA from (R)-pantothenate: step 4/5. Its function is as follows. Reversibly transfers an adenylyl group from ATP to 4'-phosphopantetheine, yielding dephospho-CoA (dPCoA) and pyrophosphate. In Methylobacterium sp. (strain 4-46), this protein is Phosphopantetheine adenylyltransferase.